Here is a 715-residue protein sequence, read N- to C-terminus: MAPAPVTLLAPGAASSMSCSQPGQRSPSNDFQVLRGTELQHLLHAVVPGPWQEDVADAEECAGRCGPLMDCWAFHYNVSSHGCQLLPWTQHSPHSRLWHSGRCDLFQEKGEWGYMPTLRNGLEENFCRNPDGDPGGPWCHTTDPAVRFQSCSIKSCRVAACVWCNGEEYRGAVDRTESGRECQRWDLQHPHQHPFEPGKFLDQGLDDNYCRNPDGSERPWCYTTDPQIEREFCDLPRCGSEAQPRQEATSVSCFRGKGEGYRGTANTTTAAYLASVGTRKSHISTDLRQKNTRASEVGGGAGVGTCCCGDLRENFCWNLDGSEAPWCFTLRPGTRVGFCYQIRRCTDDVRPQDCYHGAGEQYRGTVSKTRKGVQCQRWSAETPHKLQALTLGRHALMSGTRAWKWLRLPCHDFAPAPASVHIYLRTACTTGGELLPDPDGDSHGPWCYTMDPRTPFDYCALRRCDQVQFEKCGKRVDRLDQRRSKLRVAGGHPGNSPWTVSLRNRQGQHFCAGSLVKEQWILTARQCFSSCHMPLTGYEVWLGTLFQNPQHGEPGLQRVPVAKMLCGPSGSQLVLLKLERSVTLNQRVALICLPPEWYVVPPGTKCEIAGWGETKGTGNDTVLNVALLNVISNQECNIKHRGHVRESEMCTEGLLAPVGACEGDYGGPLACFTHNCWVLKGIRIPNRVCTRSRWPAVFTRVSVFVDWIHKVMRLG.

A signal peptide spans 1 to 20 (MAPAPVTLLAPGAASSMSCS). Positions 21 to 110 (QPGQRSPSND…GRCDLFQEKG (90 aa)) constitute a PAN domain. Kringle domains lie at 63–156 (GRCG…IKSC), 160–238 (ACVW…LPRC), 252–345 (SCFR…IRRC), and 353–464 (DCYH…LRRC). Disulfide bonds link Cys127-Cys151, Cys161-Cys238, Cys182-Cys221, Cys210-Cys233, Cys253-Cys345, Cys316-Cys339, Cys354-Cys464, Cys375-Cys447, Cys511-Cys527, Cys606-Cys671, Cys636-Cys650, and Cys661-Cys689. The region spanning 488–713 (VAGGHPGNSP…FVDWIHKVMR (226 aa)) is the Peptidase S1 domain.

It belongs to the peptidase S1 family. Plasminogen subfamily.

Its subcellular location is the secreted. This Homo sapiens (Human) protein is Putative macrophage stimulating 1-like protein (MST1L).